We begin with the raw amino-acid sequence, 398 residues long: Rhizopuspepsin-4 (398 aa).

A signal peptide spans methionine 1–alanine 21. Residues alanine 22 to glutamate 74 constitute a propeptide, activation peptide. The segment covering serine 58–serine 78 has biased composition (low complexity). The interval serine 58–aspartate 83 is disordered. The 305-residue stretch at tyrosine 90 to alanine 394 folds into the Peptidase A1 domain. Residue aspartate 108 is part of the active site. A disulfide bond links cysteine 121 and cysteine 124. The active site involves aspartate 291. Cysteine 325 and cysteine 358 form a disulfide bridge.

The protein belongs to the peptidase A1 family.

The catalysed reaction is Hydrolysis of proteins with broad specificity similar to that of pepsin A, preferring hydrophobic residues at P1 and P1'. Clots milk and activates trypsinogen. Does not cleave 4-Gln-|-His-5, but does cleave 10-His-|-Leu-11 and 12-Val-|-Glu-13 in B chain of insulin.. The sequence is that of Rhizopuspepsin-4 from Rhizopus niveus.